Reading from the N-terminus, the 67-residue chain is Large ribosomal subunit protein bL35 (67 aa).

Residues 1-16 (MPKMKTKSSAKKRFRV) are compositionally biased toward basic residues. A disordered region spans residues 1–24 (MPKMKTKSSAKKRFRVRPGGTVKR).

The protein belongs to the bacterial ribosomal protein bL35 family.

The chain is Large ribosomal subunit protein bL35 from Verminephrobacter eiseniae (strain EF01-2).